A 608-amino-acid chain; its full sequence is Aspartate--tRNA(Asp/Asn) ligase (608 aa).

E175 contributes to the L-aspartate binding site. Positions 199-202 (QLFK) are aspartate. R221 is a binding site for L-aspartate. ATP is bound by residues 221–223 (RDE) and Q230. H453 contacts L-aspartate. An ATP-binding site is contributed by E487. L-aspartate is bound at residue R494. 539–542 (GWDR) contributes to the ATP binding site. Residues 566–608 (IDPLTDAPAAITPQQRKEAGIDAKPKPKAEAQAEAQAEESAEK) are disordered. Residues 580–596 (QRKEAGIDAKPKPKAEA) show a composition bias toward basic and acidic residues.

Belongs to the class-II aminoacyl-tRNA synthetase family. Type 1 subfamily. As to quaternary structure, homodimer.

The protein resides in the cytoplasm. The enzyme catalyses tRNA(Asx) + L-aspartate + ATP = L-aspartyl-tRNA(Asx) + AMP + diphosphate. Aspartyl-tRNA synthetase with relaxed tRNA specificity since it is able to aspartylate not only its cognate tRNA(Asp) but also tRNA(Asn). Reaction proceeds in two steps: L-aspartate is first activated by ATP to form Asp-AMP and then transferred to the acceptor end of tRNA(Asp/Asn). The sequence is that of Aspartate--tRNA(Asp/Asn) ligase from Corynebacterium glutamicum (strain ATCC 13032 / DSM 20300 / JCM 1318 / BCRC 11384 / CCUG 27702 / LMG 3730 / NBRC 12168 / NCIMB 10025 / NRRL B-2784 / 534).